Consider the following 252-residue polypeptide: Ureidoacrylate amidohydrolase RutB (252 aa).

The segment covering 1–14 has biased composition (polar residues); the sequence is MSTPARNTTLTSNT. Residues 1–31 are disordered; the sequence is MSTPARNTTLTSNTPAGAPRLPGAPAPQVLP. Positions 15-27 are enriched in low complexity; sequence PAGAPRLPGAPAP. Residue D50 is the Proton acceptor of the active site. K159 is an active-site residue. C192 (nucleophile) is an active-site residue.

The protein belongs to the isochorismatase family. RutB subfamily.

The catalysed reaction is (Z)-3-ureidoacrylate + H2O + H(+) = (Z)-3-aminoacrylate + NH4(+) + CO2. It catalyses the reaction (Z)-3-ureidoacrylate + H2O = (Z)-3-aminoacrylate + carbamate + H(+). It carries out the reaction (Z)-2-methylureidoacrylate + H2O + H(+) = (Z)-2-methylaminoacrylate + NH4(+) + CO2. Its function is as follows. Hydrolyzes ureidoacrylate to form aminoacrylate and carbamate. The carbamate hydrolyzes spontaneously, thereby releasing one of the nitrogen atoms of the pyrimidine ring as ammonia and one of its carbon atoms as CO2. The chain is Ureidoacrylate amidohydrolase RutB from Variovorax paradoxus (strain S110).